A 226-amino-acid polypeptide reads, in one-letter code: ATP synthase F(0) complex subunit a (226 aa).

Helical transmembrane passes span F6 to F26, W68 to L88, Q97 to F117, I138 to V158, I164 to I184, and T200 to L222.

It belongs to the ATPase A chain family. In terms of assembly, component of the ATP synthase complex composed at least of ATP5F1A/subunit alpha, ATP5F1B/subunit beta, ATP5MC1/subunit c (homooctomer), MT-ATP6/subunit a, MT-ATP8/subunit 8, ATP5ME/subunit e, ATP5MF/subunit f, ATP5MG/subunit g, ATP5MK/subunit k, ATP5MJ/subunit j, ATP5F1C/subunit gamma, ATP5F1D/subunit delta, ATP5F1E/subunit epsilon, ATP5PF/subunit F6, ATP5PB/subunit b, ATP5PD/subunit d, ATP5PO/subunit OSCP. ATP synthase complex consists of a soluble F(1) head domain (subunits alpha(3) and beta(3)) - the catalytic core - and a membrane F(0) domain - the membrane proton channel (subunits c, a, 8, e, f, g, k and j). These two domains are linked by a central stalk (subunits gamma, delta, and epsilon) rotating inside the F1 region and a stationary peripheral stalk (subunits F6, b, d, and OSCP). Interacts with DNAJC30; interaction is direct.

It localises to the mitochondrion inner membrane. The catalysed reaction is H(+)(in) = H(+)(out). Subunit a, of the mitochondrial membrane ATP synthase complex (F(1)F(0) ATP synthase or Complex V) that produces ATP from ADP in the presence of a proton gradient across the membrane which is generated by electron transport complexes of the respiratory chain. ATP synthase complex consist of a soluble F(1) head domain - the catalytic core - and a membrane F(1) domain - the membrane proton channel. These two domains are linked by a central stalk rotating inside the F(1) region and a stationary peripheral stalk. During catalysis, ATP synthesis in the catalytic domain of F(1) is coupled via a rotary mechanism of the central stalk subunits to proton translocation. With the subunit c (ATP5MC1), forms the proton-conducting channel in the F(0) domain, that contains two crucial half-channels (inlet and outlet) that facilitate proton movement from the mitochondrial intermembrane space (IMS) into the matrix. Protons are taken up via the inlet half-channel and released through the outlet half-channel, following a Grotthuss mechanism. The chain is ATP synthase F(0) complex subunit a from Bos mutus grunniens (Wild yak).